A 548-amino-acid polypeptide reads, in one-letter code: T-complex protein 1 subunit alpha (548 aa).

It belongs to the TCP-1 chaperonin family. As to quaternary structure, heterooligomeric complex of about 850 to 900 kDa that forms two stacked rings, 12 to 16 nm in diameter.

It localises to the cytoplasm. Its function is as follows. Molecular chaperone; assists the folding of proteins upon ATP hydrolysis. Known to play a role, in vitro, in the folding of actin and tubulin. The chain is T-complex protein 1 subunit alpha (tcp1) from Dictyostelium discoideum (Social amoeba).